The sequence spans 301 residues: MNDFLVFSEEVAQAKAEKKPIVALESTIISHGMPYPENVQTAKDVERIIRDRGAVPATIAIFNEKIKIGLTEGELEQLGTSHDVEKVSRRDLPYVVAMKKHGATTVAGTMICAEMAGIRVFATGGIGGVHRGAEQTMDISADLQELARTNVAVVCAGAKSILDLGLTLEYLETHGVPVIGYQTDVLPAFYSRTSPFRVDYRLDSAKEIAQFLETKWKLGLNGGVVIANPVPKEEELEESYITAIIEQALKEAEKQHITGKSVTPFLLDRVKTLTGGKSLQANIALVKNNAALAADLARELS.

The Proton donor role is filled by Glu-25. Residues Lys-86 and Val-106 each coordinate substrate. Position 138 (Asp-138) interacts with Mn(2+). 140-142 contributes to the substrate binding site; it reads SAD. Lys-159 acts as the Nucleophile in catalysis.

This sequence belongs to the pseudouridine-5'-phosphate glycosidase family. As to quaternary structure, homotrimer. Mn(2+) serves as cofactor.

The catalysed reaction is D-ribose 5-phosphate + uracil = psi-UMP + H2O. Catalyzes the reversible cleavage of pseudouridine 5'-phosphate (PsiMP) to ribose 5-phosphate and uracil. Functions biologically in the cleavage direction, as part of a pseudouridine degradation pathway. The chain is Pseudouridine-5'-phosphate glycosidase from Geobacillus kaustophilus (strain HTA426).